The sequence spans 1050 residues: FHIP family protein GE18198 (1050 aa).

Ser-498 and Ser-805 each carry phosphoserine. Disordered regions lie at residues 800–827 (KGNE…GQLR), 865–888 (TSMF…SASS), 911–954 (TDGR…SGSN), and 968–995 (SNTT…SEPA). Polar residues predominate over residues 808 to 826 (HHSQQQQMATNSGQQQGQL). Low complexity predominate over residues 872-888 (SASNTSTTPPNGSSASS). The segment covering 918 to 935 (HAQTSAGTCETSLSTQPQ) has biased composition (polar residues). The segment covering 941-954 (TGAIATSATASGSN) has biased composition (low complexity). The span at 968 to 977 (SNTTTHSAST) shows a compositional bias: polar residues.

It belongs to the FHIP family.

The chain is FHIP family protein GE18198 from Drosophila yakuba (Fruit fly).